Reading from the N-terminus, the 131-residue chain is Small ribosomal subunit protein uS8 (131 aa).

Residues 1–27 form a disordered region; the sequence is MSMTDPVADMLTRIRNGQRASKNEVSM.

Belongs to the universal ribosomal protein uS8 family. Part of the 30S ribosomal subunit. Contacts proteins S5 and S12.

Its function is as follows. One of the primary rRNA binding proteins, it binds directly to 16S rRNA central domain where it helps coordinate assembly of the platform of the 30S subunit. This chain is Small ribosomal subunit protein uS8, found in Thioalkalivibrio sulfidiphilus (strain HL-EbGR7).